The sequence spans 387 residues: D(4) dopamine receptor (387 aa).

Residues 1-34 (MGNSSATEDGGLLAGRGPESLGTGAGLGGAGAAA) are Extracellular-facing. N-linked (GlcNAc...) asparagine glycosylation occurs at Asn-3. The chain crosses the membrane as a helical span at residues 35-57 (LVGGVLLIGLVLAGNSLVCVSVA). At 58-67 (SERTLQTPTN) the chain is on the cytoplasmic side. Residues 68–90 (YFIVSLAAADLLLAVLVLPLFVY) traverse the membrane as a helical segment. Asp-77 contributes to the Na(+) binding site. Over 91–106 (SEVQGGVWLLSPRLCD) the chain is Extracellular. Cys-105 and Cys-180 are joined by a disulfide. A helical membrane pass occupies residues 107–128 (TLMAMDVMLCTASIFNLCAISV). Na(+) is bound at residue Ser-119. Over 129–146 (DRFVAVTVPLRYNQQGQC) the chain is Cytoplasmic. A helical transmembrane segment spans residues 147–170 (QLLLIAATWLLSAAVASPVVCGLN). Topologically, residues 171–186 (DVPGRDPAVCCLENRD) are extracellular. Residues 187-208 (YVVYSSVCSFFLPCPLMLLLYW) traverse the membrane as a helical segment. The Cytoplasmic portion of the chain corresponds to 209-314 (ATFRGLRRWE…ITGRERKAMR (106 aa)). Disordered stretches follow at residues 224–247 (KLHS…TQGP) and 287–306 (AALP…AKIT). The helical transmembrane segment at 315-337 (VLPVVVGAFLVCWTPFFVVHITR) threads the bilayer. At 338–346 (ALCPACFVS) the chain is on the extracellular side. An intrachain disulfide couples Cys-340 to Cys-343. A helical membrane pass occupies residues 347-369 (PRLVSAVTWLGYVNSALNPIIYT). Residues 370–387 (IFNAEFRSVFRKTLRLRC) are Cytoplasmic-facing. Cys-387 carries the S-palmitoyl cysteine lipid modification.

It belongs to the G-protein coupled receptor 1 family. In terms of assembly, forms homo- and heterooligomers with DRD2. D4.7 allele exhibits higher affinity for homodimers compared to DRD2 heterodimers, while alleles D42. and 4.4 have similar affinities for both. The interaction with DRD2 may modulate agonist-induced downstream signaling. Interacts with CLIC6. Interacts with GPRASP1. May interact with ADORA2A. Interacts with KLHL12. Post-translationally, palmitoylated. Palmitoylation of the C-terminal Cys is important for normal expression at the cell membrane. In terms of tissue distribution, detected in olfactory bulb, hypothalamus, olfactory tubercle, brainstem and striatum.

It localises to the cell membrane. Dopamine receptor responsible for neuronal signaling in the mesolimbic system of the brain, an area of the brain that regulates emotion and complex behavior. Activated by dopamine, but also by epinephrine and norepinephrine, and by numerous synthetic agonists and drugs. Agonist binding triggers signaling via G proteins that inhibit adenylyl cyclase. Modulates the circadian rhythm of contrast sensitivity by regulating the rhythmic expression of NPAS2 in the retinal ganglion cells. The sequence is that of D(4) dopamine receptor (Drd4) from Mus musculus (Mouse).